The following is a 379-amino-acid chain: GDSL esterase/lipase EXL2 (379 aa).

The first 35 residues, 1-35 (MKRNSINIHHVTSFSSSPFWCVFFLVLLCKTSTNA), serve as a signal peptide directing secretion. The N-linked (GlcNAc...) asparagine glycan is linked to asparagine 42. Serine 54 functions as the Nucleophile in the catalytic mechanism. Residues aspartate 358 and histidine 361 contribute to the active site.

The protein belongs to the 'GDSL' lipolytic enzyme family.

It localises to the secreted. The sequence is that of GDSL esterase/lipase EXL2 (EXL2) from Arabidopsis thaliana (Mouse-ear cress).